We begin with the raw amino-acid sequence, 96 residues long: U-reduvitoxin-Pr12a (96 aa).

An N-terminal signal peptide occupies residues 1–20 (MKTALLLFFALVFIAFETEA). Disulfide bonds link Cys-21/Cys-38, Cys-33/Cys-53, and Cys-36/Cys-47. Pacifastin domains are found at residues 21-55 (CRPGALTVAPDGCNMCTCLSNGKLGRCTHDLICPP) and 59-94 (KLECEPGKPFKNDCNDCICSEDGLTAKCTRKLCIHK). Residues 54–56 (PPR) form a pro-Pro-Arg motif necessary for proteolytic processing region. Intrachain disulfides connect Cys-62/Cys-77, Cys-72/Cys-91, and Cys-75/Cys-86.

The protein belongs to the protease inhibitor I19 family. In terms of tissue distribution, expressed by the venom gland.

Its subcellular location is the secreted. Its function is as follows. Inhibits trypsin activity and prophenoloxidase (PPO) activation, an enzyme essential for both clotting and insect innate immune responses. It does not inhibit activity of chymotrypsin and protease K, and has no effect on phenoloxidase (PO) activity. The chain is U-reduvitoxin-Pr12a from Platymeris rhadamanthus (Red spot assassin bug).